An 84-amino-acid chain; its full sequence is uncharacterized protein (84 aa).

Low complexity predominate over residues 34 to 54 (ATSTASSSAAKNTTSSSKNAA). The tract at residues 34–57 (ATSTASSSAAKNTTSSSKNAAPGM) is disordered. Residue N45 is glycosylated (N-linked (GlcNAc...) asparagine). The chain crosses the membrane as a helical span at residues 66–83 (YGIIMAAFAAVSFVLGTG).

It is found in the endoplasmic reticulum membrane. This is an uncharacterized protein from Saccharomyces cerevisiae (strain ATCC 204508 / S288c) (Baker's yeast).